A 176-amino-acid polypeptide reads, in one-letter code: Parathyroid hormone-related protein (176 aa).

A signal peptide spans 1 to 25 (MMFTKLFQQWSFAVFLLSYSVPSYG). A propeptide spanning residues 26–37 (RSVEGISRRLKR) is cleaved from the precursor. The segment at 58–69 (RIFLQNLIEGVN) is important for receptor binding. Residues 76–157 (TSEVSPNPKP…WLNSGMYGSN (82 aa)) form a disordered region. 2 stretches are compositionally biased toward polar residues: residues 77–91 (SEVS…NTKN) and 106–116 (TQETNKSQTYK). The Nuclear localization signal motif lies at 109–130 (TNKSQTYKEQPLKVSGKKKKAK). Basic residues predominate over residues 123–133 (SGKKKKAKPGK).

The protein belongs to the parathyroid hormone family.

The protein resides in the secreted. Its subcellular location is the cytoplasm. It is found in the nucleus. Functionally, neuroendocrine peptide which is a critical regulator of cellular and organ growth, development, migration, differentiation and survival and of epithelial calcium ion transport. Acts by binding to its receptor, PTH1R, activating G protein-coupled receptor signaling. Regulates endochondral bone development and epithelial-mesenchymal interactions during the formation of the mammary glands and teeth. Required for skeletal homeostasis. In terms of biological role, potent inhibitor of osteoclastic bone resorption. This chain is Parathyroid hormone-related protein (PTHLH), found in Gallus gallus (Chicken).